The chain runs to 183 residues: Guanylate kinase (183 aa).

The region spanning 4–182 (GRVVVLTGPS…AITALEAAIF (179 aa)) is the Guanylate kinase-like domain. ATP is bound at residue 11 to 18 (GPSGVGKG).

This sequence belongs to the guanylate kinase family.

It is found in the cytoplasm. The catalysed reaction is GMP + ATP = GDP + ADP. It carries out the reaction dZMP + ATP = dZDP + ADP. It participates in purine metabolism. Essential for recycling GMP and indirectly, cGMP. Its function is as follows. (Microbial infection) Catalyzes the phosphorylation of dZMP to dZDP, when the bacterium is infected by a phage that produces the substrate for the synthesis of dZTP (2- amino-2'-deoxyadenosine 5'-triphosphate), which is then used by the phage as a DNA polymerase substrate. The sequence is that of Guanylate kinase from Synechococcus elongatus (strain ATCC 33912 / PCC 7942 / FACHB-805) (Anacystis nidulans R2).